Reading from the N-terminus, the 703-residue chain is Elongation factor G (703 aa).

Residues 7–287 enclose the tr-type G domain; sequence KFTRNIGIAA…AVMRYLPSPA (281 aa). GTP-binding positions include 16 to 23, 84 to 88, and 138 to 141; these read AHIDAGKT, DTPGH, and NKMD.

This sequence belongs to the TRAFAC class translation factor GTPase superfamily. Classic translation factor GTPase family. EF-G/EF-2 subfamily.

Its subcellular location is the cytoplasm. Catalyzes the GTP-dependent ribosomal translocation step during translation elongation. During this step, the ribosome changes from the pre-translocational (PRE) to the post-translocational (POST) state as the newly formed A-site-bound peptidyl-tRNA and P-site-bound deacylated tRNA move to the P and E sites, respectively. Catalyzes the coordinated movement of the two tRNA molecules, the mRNA and conformational changes in the ribosome. The polypeptide is Elongation factor G (Christiangramia forsetii (strain DSM 17595 / CGMCC 1.15422 / KT0803) (Gramella forsetii)).